We begin with the raw amino-acid sequence, 122 residues long: Holo-[acyl-carrier-protein] synthase (122 aa).

2 residues coordinate Mg(2+): Asp9 and Glu58.

The protein belongs to the P-Pant transferase superfamily. AcpS family. Requires Mg(2+) as cofactor.

It is found in the cytoplasm. The catalysed reaction is apo-[ACP] + CoA = holo-[ACP] + adenosine 3',5'-bisphosphate + H(+). Transfers the 4'-phosphopantetheine moiety from coenzyme A to a Ser of acyl-carrier-protein. The protein is Holo-[acyl-carrier-protein] synthase of Chlamydia felis (strain Fe/C-56) (Chlamydophila felis).